A 445-amino-acid polypeptide reads, in one-letter code: Lateral flagellar hook-associated protein 2 (445 aa).

Residues 388 to 423 (SGAFKSRKEALQANLDRLSDKQTTLERKYDMSYKRY) are a coiled coil.

This sequence belongs to the FliD family. As to quaternary structure, homopentamer.

The protein localises to the secreted. It localises to the bacterial flagellum. Functionally, required for the morphogenesis and for the elongation of the flagellar filament by facilitating polymerization of the flagellin monomers at the tip of growing filament. Forms a capping structure, which prevents flagellin subunits (transported through the central channel of the flagellum) from leaking out without polymerization at the distal end. Essential for swarming motility. The polypeptide is Lateral flagellar hook-associated protein 2 (fliDL) (Vibrio parahaemolyticus serotype O3:K6 (strain RIMD 2210633)).